The chain runs to 497 residues: Malonate-semialdehyde dehydrogenase (497 aa).

NAD(+)-binding residues include phenylalanine 148, lysine 172, glutamate 175, arginine 176, and serine 225. Cysteine 280 (nucleophile) is an active-site residue. Glutamate 382 lines the NAD(+) pocket.

The protein belongs to the aldehyde dehydrogenase family.

It catalyses the reaction 3-oxopropanoate + NAD(+) + CoA + H2O = hydrogencarbonate + acetyl-CoA + NADH + H(+). In terms of biological role, involved in the degradation of beta-alanine. Likely catalyzes the NAD(+)- and CoA-dependent oxidative decarboxylation of malonate semialdehyde (3-oxopropanoate) to acetyl-CoA. The polypeptide is Malonate-semialdehyde dehydrogenase (Pseudomonas aeruginosa (strain ATCC 15692 / DSM 22644 / CIP 104116 / JCM 14847 / LMG 12228 / 1C / PRS 101 / PAO1)).